The following is a 318-amino-acid chain: Aspartate carbamoyltransferase catalytic subunit (318 aa).

Arg-67 and Thr-68 together coordinate carbamoyl phosphate. Lys-95 is an L-aspartate binding site. 3 residues coordinate carbamoyl phosphate: Arg-117, His-145, and Gln-148. L-aspartate-binding residues include Arg-178 and Arg-236. 2 residues coordinate carbamoyl phosphate: Gly-277 and Pro-278.

The protein belongs to the aspartate/ornithine carbamoyltransferase superfamily. ATCase family. Heterododecamer (2C3:3R2) of six catalytic PyrB chains organized as two trimers (C3), and six regulatory PyrI chains organized as three dimers (R2).

The enzyme catalyses carbamoyl phosphate + L-aspartate = N-carbamoyl-L-aspartate + phosphate + H(+). Its pathway is pyrimidine metabolism; UMP biosynthesis via de novo pathway; (S)-dihydroorotate from bicarbonate: step 2/3. Functionally, catalyzes the condensation of carbamoyl phosphate and aspartate to form carbamoyl aspartate and inorganic phosphate, the committed step in the de novo pyrimidine nucleotide biosynthesis pathway. In Roseiflexus sp. (strain RS-1), this protein is Aspartate carbamoyltransferase catalytic subunit.